A 56-amino-acid polypeptide reads, in one-letter code: Large ribosomal subunit protein bL33 (56 aa).

This sequence belongs to the bacterial ribosomal protein bL33 family.

The protein is Large ribosomal subunit protein bL33 of Vibrio vulnificus (strain YJ016).